The sequence spans 427 residues: MASFPFSPSFMFDFELTRILGSASSGGCEVGEFKSAVGKIKKHDAESWHAAWKEQGERAESIANEAAAAGFRIPARNAYLRASNYFRASAYMFTNSEPRVVPLSERSIANFERAAGLMDGEVMFVEIPYEEGITLTGWLCLPPKEARVEGKKPLILYAGGADATKEELYFLYGHTGPQLGYAVLCLEGPGQGMLLKKSKIPLRPDFEVVAGYVLDYFSSLAKSRPDLELDLDRIAVAGAATGGYFALRAATDARIKACVAVDPFFSMWELALTRAPQSFMKLWENGWVMDNVLDTFTDAHCRGNFQAGWEMSLGKSSMGVEKSSAMLRRFKDFSLENKKDGKILERVTCPVFLTGPGNGSEMYSSADDSTLKIKDMLKKVPADKKEIWLPSDVADGGLTAKIGAWALLAQKTFLFLDKQFEVKRKAL.

Asp-368 is an active-site residue.

It belongs to the AB hydrolase superfamily. As to quaternary structure, homodimer.

It functions in the pathway mycotoxin biosynthesis. Its function is as follows. Alpha/beta hydrolase; part of the gene cluster that mediates the biosynthesis of GKK1032, fungal natural products containing a macrocyclic para-cyclophane connected to a decahydrofluorene ring system that show potent antitumor activities. Within the pathway, gkaG catalyzes the Knoevenagel condensation that affords the 3-pyrrolin-2-one ring, using as substrate the polyketide-tyrosyl acyl thioester product of gkaA. The pathway begins with the PKS-NRPS gkaA which, with the help of the trans-enoyl reductase gkaC, synthesizes the polyketide-tyrosyl acyl thioester product which can be reductively off-loaded by the terminal reductase (R) domain in gkaA. The alpha/beta hydrolase gkaG is then required to catalyze the subsequent Knoevenagel condensation that affords the 3-pyrrolin-2-one ring, whereas the three proteins gkaB, gkaX and gkaZ then function synergistically to form the cyclophane. The polypeptide is Alpha/beta hydrolase gkaG (Penicillium citrinum).